Here is a 185-residue protein sequence, read N- to C-terminus: ATP synthase subunit delta (185 aa).

The protein belongs to the ATPase delta chain family. F-type ATPases have 2 components, F(1) - the catalytic core - and F(0) - the membrane proton channel. F(1) has five subunits: alpha(3), beta(3), gamma(1), delta(1), epsilon(1). F(0) has three main subunits: a(1), b(2) and c(10-14). The alpha and beta chains form an alternating ring which encloses part of the gamma chain. F(1) is attached to F(0) by a central stalk formed by the gamma and epsilon chains, while a peripheral stalk is formed by the delta and b chains.

The protein resides in the cell inner membrane. Its function is as follows. F(1)F(0) ATP synthase produces ATP from ADP in the presence of a proton or sodium gradient. F-type ATPases consist of two structural domains, F(1) containing the extramembraneous catalytic core and F(0) containing the membrane proton channel, linked together by a central stalk and a peripheral stalk. During catalysis, ATP synthesis in the catalytic domain of F(1) is coupled via a rotary mechanism of the central stalk subunits to proton translocation. This protein is part of the stalk that links CF(0) to CF(1). It either transmits conformational changes from CF(0) to CF(1) or is implicated in proton conduction. This Phocaeicola vulgatus (strain ATCC 8482 / DSM 1447 / JCM 5826 / CCUG 4940 / NBRC 14291 / NCTC 11154) (Bacteroides vulgatus) protein is ATP synthase subunit delta.